Reading from the N-terminus, the 101-residue chain is MAKKALVVKDERKRALACRSREKRSAVRNMRNDKTISLKERVAIQAKLNSLPRNSSPARSKNRCSITGRPRGYYRKFGISRIQLRVLANWGKLPGVVKSSW.

The protein belongs to the universal ribosomal protein uS14 family. Part of the 30S ribosomal subunit. Contacts proteins S3 and S10.

Functionally, binds 16S rRNA, required for the assembly of 30S particles and may also be responsible for determining the conformation of the 16S rRNA at the A site. The polypeptide is Small ribosomal subunit protein uS14 (Neorickettsia sennetsu (strain ATCC VR-367 / Miyayama) (Ehrlichia sennetsu)).